A 207-amino-acid polypeptide reads, in one-letter code: Mediator of RNA polymerase II transcription subunit 21 (207 aa).

The disordered stretch occupies residues 36–120 (IPPPDVPDAA…APDSPRTFAS (85 aa)). Positions 91–108 (GEGAQTPGPAAGAGADPN) are enriched in low complexity. Residues 146-194 (IDSSEAEQEKRIRELEGELRQVEEERELKMRELKRLRRTLENVLTAVET) are a coiled coil.

This sequence belongs to the Mediator complex subunit 21 family. In terms of assembly, component of the Mediator complex.

The protein localises to the nucleus. In terms of biological role, component of the Mediator complex, a coactivator involved in the regulated transcription of nearly all RNA polymerase II-dependent genes. Mediator functions as a bridge to convey information from gene-specific regulatory proteins to the basal RNA polymerase II transcription machinery. Mediator is recruited to promoters by direct interactions with regulatory proteins and serves as a scaffold for the assembly of a functional preinitiation complex with RNA polymerase II and the general transcription factors. The chain is Mediator of RNA polymerase II transcription subunit 21 (srb7) from Aspergillus fumigatus (strain ATCC MYA-4609 / CBS 101355 / FGSC A1100 / Af293) (Neosartorya fumigata).